Here is a 108-residue protein sequence, read N- to C-terminus: Small ribosomal subunit protein eS25A (108 aa).

Low complexity predominate over residues M1 to G20. Residues M1–K30 are disordered. P2 carries the n,N-dimethylproline; by NTM1 modification. The segment covering K21–K30 has biased composition (basic residues).

The protein belongs to the eukaryotic ribosomal protein eS25 family. Component of the small ribosomal subunit (SSU). Mature yeast ribosomes consist of a small (40S) and a large (60S) subunit. The 40S small subunit contains 1 molecule of ribosomal RNA (18S rRNA) and 33 different proteins (encoded by 57 genes). The large 60S subunit contains 3 rRNA molecules (25S, 5.8S and 5S rRNA) and 46 different proteins (encoded by 81 genes).

It localises to the cytoplasm. Its function is as follows. Component of the ribosome, a large ribonucleoprotein complex responsible for the synthesis of proteins in the cell. The small ribosomal subunit (SSU) binds messenger RNAs (mRNAs) and translates the encoded message by selecting cognate aminoacyl-transfer RNA (tRNA) molecules. The large subunit (LSU) contains the ribosomal catalytic site termed the peptidyl transferase center (PTC), which catalyzes the formation of peptide bonds, thereby polymerizing the amino acids delivered by tRNAs into a polypeptide chain. The nascent polypeptides leave the ribosome through a tunnel in the LSU and interact with protein factors that function in enzymatic processing, targeting, and the membrane insertion of nascent chains at the exit of the ribosomal tunnel. The chain is Small ribosomal subunit protein eS25A from Saccharomyces cerevisiae (strain ATCC 204508 / S288c) (Baker's yeast).